Consider the following 544-residue polypeptide: Chaperonin GroEL (544 aa).

Residues 29–32 (TLGP), 86–90 (DGTTT), glycine 413, 477–479 (DVL), and aspartate 493 each bind ATP.

Belongs to the chaperonin (HSP60) family. In terms of assembly, forms a cylinder of 14 subunits composed of two heptameric rings stacked back-to-back. Interacts with the co-chaperonin GroES.

The protein resides in the cytoplasm. The enzyme catalyses ATP + H2O + a folded polypeptide = ADP + phosphate + an unfolded polypeptide.. Its function is as follows. Together with its co-chaperonin GroES, plays an essential role in assisting protein folding. The GroEL-GroES system forms a nano-cage that allows encapsulation of the non-native substrate proteins and provides a physical environment optimized to promote and accelerate protein folding. The polypeptide is Chaperonin GroEL (Clostridium kluyveri (strain NBRC 12016)).